Reading from the N-terminus, the 449-residue chain is Sensor protein QseC (449 aa).

Residues 1–12 (MKFTQRLSLRVR) lie on the Cytoplasmic side of the membrane. The helical transmembrane segment at 13-33 (LTLIFLILASVTWLLSSFVAW) threads the bilayer. Over 34 to 156 (KQTTDNVDEL…QEWEYREDMA (123 aa)) the chain is Periplasmic. A helical transmembrane segment spans residues 157 to 177 (LAIVAGQLIPWLVALPVMLII). Topologically, residues 178–449 (MMVLLGRELA…QGGFEAKVSW (272 aa)) are cytoplasmic. A Histidine kinase domain is found at 243 to 449 (DAAHELRSPL…QGGFEAKVSW (207 aa)). At His246 the chain carries Phosphohistidine; by autocatalysis.

Its subcellular location is the cell inner membrane. It carries out the reaction ATP + protein L-histidine = ADP + protein N-phospho-L-histidine.. In terms of biological role, member of a two-component regulatory system QseB/QseC. Activates the flagella regulon by activating transcription of FlhDC. May activate QseB by phosphorylation. The protein is Sensor protein QseC (qseC) of Escherichia coli O157:H7.